Reading from the N-terminus, the 242-residue chain is MIILPAIDLKEGKCIRLYQGDFKASKVVAEDPIEVALKFKENGAEYIHIVDLDGALTGEIKNLSIISSIIKTINIPVELGGGIRNLNTIDMLIGAGIERVILGTAALNNRGLVEEAVKKYDEKIAIGIDAKNEKVAINGWLNVSSINYIDFAKEMEKIGVRNIIFTDISKDGTLKGPNLKQLEKLNESINCNVIASGGIKDIEDLKGIKEMDVYGAIVGKAIYSGNINLNEAIKIINKGSSK.

Aspartate 8 (proton acceptor) is an active-site residue. Catalysis depends on aspartate 129, which acts as the Proton donor.

The protein belongs to the HisA/HisF family.

The protein resides in the cytoplasm. The enzyme catalyses 1-(5-phospho-beta-D-ribosyl)-5-[(5-phospho-beta-D-ribosylamino)methylideneamino]imidazole-4-carboxamide = 5-[(5-phospho-1-deoxy-D-ribulos-1-ylimino)methylamino]-1-(5-phospho-beta-D-ribosyl)imidazole-4-carboxamide. It participates in amino-acid biosynthesis; L-histidine biosynthesis; L-histidine from 5-phospho-alpha-D-ribose 1-diphosphate: step 4/9. The polypeptide is 1-(5-phosphoribosyl)-5-[(5-phosphoribosylamino)methylideneamino] imidazole-4-carboxamide isomerase (Clostridium botulinum (strain ATCC 19397 / Type A)).